The primary structure comprises 152 residues: MALNQLSLSLQFARDAEATAHRATLPRHAVARWIRHALAVDAEITVRIVGAEEGQRLNREFRHKDYATNVLTFDYQQEPVAVADLVLCAPVVEREAREQNKTLEEHYAHLLVHGTLHAQGWDHETSEQDAQEMEVYETAILQELGFADPYAA.

H113, H117, and H123 together coordinate Zn(2+).

Belongs to the endoribonuclease YbeY family. It depends on Zn(2+) as a cofactor.

It is found in the cytoplasm. Single strand-specific metallo-endoribonuclease involved in late-stage 70S ribosome quality control and in maturation of the 3' terminus of the 16S rRNA. The polypeptide is Endoribonuclease YbeY (Acidovorax ebreus (strain TPSY) (Diaphorobacter sp. (strain TPSY))).